The following is a 64-amino-acid chain: U6-theraphotoxin-Cg1a (64 aa).

The signal sequence occupies residues 1–20 (MTRKILAVLLVFTLVACNNA). Residues 21–38 (EKYSETDVEDSPMIQERR) constitute a propeptide that is removed on maturation. 3 disulfide bridges follow: cysteine 39-cysteine 55, cysteine 46-cysteine 58, and cysteine 54-cysteine 63.

The protein belongs to the neurotoxin 36 family. 02 subfamily. As to expression, expressed by the venom gland.

It is found in the secreted. Functionally, probable ion channel inhibitor. The protein is U6-theraphotoxin-Cg1a of Chilobrachys guangxiensis (Chinese earth tiger tarantula).